A 349-amino-acid chain; its full sequence is DNA polymerase IV (349 aa).

Residues 3–187 form the UmuC domain; it reads VLFVDFDYFF…LDISKVPGVG (185 aa). Residues D7 and D105 each coordinate Mg(2+). E106 is a catalytic residue.

This sequence belongs to the DNA polymerase type-Y family. In terms of assembly, monomer. It depends on Mg(2+) as a cofactor.

It localises to the cytoplasm. It catalyses the reaction DNA(n) + a 2'-deoxyribonucleoside 5'-triphosphate = DNA(n+1) + diphosphate. Poorly processive, error-prone DNA polymerase involved in untargeted mutagenesis. Copies undamaged DNA at stalled replication forks, which arise in vivo from mismatched or misaligned primer ends. These misaligned primers can be extended by PolIV. Exhibits no 3'-5' exonuclease (proofreading) activity. May be involved in translesional synthesis. This is DNA polymerase IV from Metallosphaera sedula (strain ATCC 51363 / DSM 5348 / JCM 9185 / NBRC 15509 / TH2).